The primary structure comprises 77 residues: Conotoxin Ar5.1 b (77 aa).

A signal peptide spans 1–19 (MLCLPVFIILLLLASPAAS). Residues 20 to 44 (NPLKTRIQSDLIRAALEDADMKNEK) constitute a propeptide that is removed on maturation.

This sequence belongs to the conotoxin T superfamily. Contains 2 disulfide bonds that can be either 'C1-C3, C2-C4' or 'C1-C4, C2-C3', since these disulfide connectivities have been observed for conotoxins with cysteine framework V (for examples, see AC P0DQQ7 and AC P81755). Expressed by the venom duct.

Its subcellular location is the secreted. This is Conotoxin Ar5.1 b from Conus arenatus (Sand-dusted cone).